Consider the following 311-residue polypeptide: Tricarboxylate transport protein, mitochondrial (311 aa).

Residues 1–13 (MAAPRAPRALTAA) constitute a propeptide, removed in mature form. Solcar repeat units lie at residues 23-111 (THPG…LSNH), 122-208 (RRGL…LRNW), and 218-303 (MNPL…VVKL). 3 consecutive transmembrane segments (helical) span residues 29 to 46 (ILAGGLAGGIEICITFPT), 86 to 105 (GLSSLLYGSIPKAAVRFGMF), and 129 to 143 (LGAGVAEAVVVVCPM). Ser156 is subject to Phosphoserine. Helical transmembrane passes span 183–202 (GLTATVLKQGSNQAIRFFVM), 224–241 (GVFGAVAGAASVFGNTPL), and 278–297 (GTVPRLGRVCLDVAIVFVIY).

This sequence belongs to the mitochondrial carrier (TC 2.A.29) family. Post-translationally, possesses a short cleavable presequence, which, however, is found to be dispensable both for targeting to mitochondria and insertion into the inner membrane. However, the presequence is required to keep SLC25A1 in a soluble state and thus in an import-competent state. Mature SLC25A1 lacking the presequence is prone to aggregation.

Its subcellular location is the mitochondrion inner membrane. The enzyme catalyses (S)-malate(in) + citrate(out) = (S)-malate(out) + citrate(in). The catalysed reaction is citrate(out) + succinate(in) = citrate(in) + succinate(out). It catalyses the reaction D-threo-isocitrate(in) + citrate(out) = D-threo-isocitrate(out) + citrate(in). It carries out the reaction cis-aconitate(in) + citrate(out) = cis-aconitate(out) + citrate(in). The enzyme catalyses trans-aconitate(in) + citrate(out) = trans-aconitate(out) + citrate(in). The catalysed reaction is phosphoenolpyruvate(in) + citrate(out) = phosphoenolpyruvate(out) + citrate(in). It catalyses the reaction maleate(in) + citrate(out) = maleate(out) + citrate(in). Its function is as follows. Mitochondrial electroneutral antiporter that exports citrate from the mitochondria into the cytosol in exchange for malate. Also able to mediate the exchange of citrate for isocitrate, phosphoenolpyruvate, cis-aconitate and to a lesser extent trans-aconitate, maleate and succinate. In the cytoplasm, citrate plays important roles in fatty acid and sterol synthesis, regulation of glycolysis, protein acetylation, and other physiopathological processes. In Rattus norvegicus (Rat), this protein is Tricarboxylate transport protein, mitochondrial (Slc25a1).